The chain runs to 190 residues: MQVILLERVAKLGQMGDVVKVRDGYARNFLLPQGKALRANDANIKSFEARKAQLEARNLETKKEAEAAAAKLEGQKFVVIRSASDAGALYGSVTPRDAAEAATAGGFSVDKRQVALKAPIKELGLHDVHVILHPEVQATITINVARSAEEAAIQAAGKSIQQLAAEADAAAEFEIAELFDEVGAAASDDE.

It belongs to the bacterial ribosomal protein bL9 family.

Its function is as follows. Binds to the 23S rRNA. This chain is Large ribosomal subunit protein bL9, found in Rhodobacter capsulatus (strain ATCC BAA-309 / NBRC 16581 / SB1003).